Reading from the N-terminus, the 135-residue chain is Large ribosomal subunit protein eL32 (135 aa).

Residue K9 forms a Glycyl lysine isopeptide (Lys-Gly) (interchain with G-Cter in SUMO2) linkage. An N6-succinyllysine modification is found at K50. Phosphoserine is present on S62.

Belongs to the eukaryotic ribosomal protein eL32 family. As to quaternary structure, component of the large ribosomal subunit.

It is found in the cytoplasm. Functionally, component of the large ribosomal subunit. The ribosome is a large ribonucleoprotein complex responsible for the synthesis of proteins in the cell. The chain is Large ribosomal subunit protein eL32 (RPL32) from Oryctolagus cuniculus (Rabbit).